Reading from the N-terminus, the 243-residue chain is Proteasome subunit beta (243 aa).

2 stretches are compositionally biased toward basic and acidic residues: residues 1-11 (MRTPTHDEFSG) and 33-47 (NADR…KETK). Positions 1 to 49 (MRTPTHDEFSGRLDSLNGDRSNVFGPELGEFSNADRRADELGDKETKTG) are cleaved as a propeptide — removed in mature form; by autocatalysis. Positions 1–50 (MRTPTHDEFSGRLDSLNGDRSNVFGPELGEFSNADRRADELGDKETKTGT) are disordered. Residue T50 is the Nucleophile of the active site. S129 is modified (phosphoserine).

It belongs to the peptidase T1B family. The 20S proteasome core is composed of 14 alpha and 14 beta subunits that assemble into four stacked heptameric rings, resulting in a barrel-shaped structure. The two inner rings, each composed of seven catalytic beta subunits, are sandwiched by two outer rings, each composed of seven alpha subunits. H.volcanii produces at least 2 types of 20S proteasomes: an alpha1-beta proteasome and a proteasome containing all three subunits (alpha1, alpha2, and beta) that appears to be asymmetrical with homo-oligomeric alpha1 and alpha2 rings positioned on separate ends. The catalytic chamber with the active sites is on the inside of the barrel. Has probably a gated structure, the ends of the cylinder being occluded by the N-termini of the alpha-subunits. Is likely capped at one or both ends by the proteasome regulatory ATPase, PAN.

It is found in the cytoplasm. It catalyses the reaction Cleavage of peptide bonds with very broad specificity.. Its activity is regulated as follows. The formation of the proteasomal ATPase PAN-20S proteasome complex, via the docking of the C-termini of PAN into the intersubunit pockets in the alpha-rings, triggers opening of the gate for substrate entry. Interconversion between the open-gate and close-gate conformations leads to a dynamic regulation of the 20S proteasome proteolysis activity. In vitro, the chymotrypsin-like activity of the alpha1-beta proteasome is potently inhibited by carbobenzoxyl-leucinyl-leucinyl-leucinal-H (MG132) and significantly by N-acetyl-leucinyl-leucinyl-norleucinal-H (calpain inhibitor I). Its function is as follows. Component of the proteasome core, a large protease complex with broad specificity involved in protein degradation. The H.volcanii alpha1-beta proteasome is able to cleave oligopeptides after Phe, Tyr and Trp, poorly after Glu but not after Arg. Thus, displays chymotrypsin-like activity, low caspase-like activity but no trypsin-like activity. The protein is Proteasome subunit beta of Haloferax volcanii (strain ATCC 29605 / DSM 3757 / JCM 8879 / NBRC 14742 / NCIMB 2012 / VKM B-1768 / DS2) (Halobacterium volcanii).